A 304-amino-acid chain; its full sequence is Eukaryotic translation initiation factor 2 subunit alpha (304 aa).

Residues 17–88 (DDIVMVNVQQ…EKGYIDLSKR (72 aa)) form the S1 motif domain. S52 bears the Phosphoserine; by GCN2 mark. Residues 283–304 (LESKELDNRSDSEDDEDESDDE) are disordered. Over residues 284-293 (ESKELDNRSD) the composition is skewed to basic and acidic residues. Phosphoserine is present on residues S292 and S294. The span at 294–304 (SEDDEDESDDE) shows a compositional bias: acidic residues.

This sequence belongs to the eIF-2-alpha family. Eukaryotic translation initiation factor 2 eIF2 is a heterotrimeric complex composed of an alpha, a beta and a gamma subunit. The factors eIF-1, eIF-2, eIF-3, TIF5/eIF-5 and methionyl-tRNAi form a multifactor complex (MFC) that may bind to the 40S ribosome. Interacts with CDC123; the interaction is direct. Interacts with GCD1. Post-translationally, phosphorylated; phosphorylation on Ser-52 by the GCN2 protein kinase occurs in response to low amino acid, carbon, or purine availability. Phosphorylation inhibits the guanine nucleotide exchange factor activity of the eIF2B complex.

It is found in the cytoplasm. The protein localises to the cytosol. Its function is as follows. eIF-2 functions in the early steps of protein synthesis by forming a ternary complex with GTP and initiator tRNA. This complex binds to a 40S ribosomal subunit, followed by mRNA binding to form a 43S pre-initiation complex. Junction of the 60S ribosomal subunit to form the 80S initiation complex is preceded by hydrolysis of the GTP bound to eIF-2 and release of an eIF-2-GDP binary complex. In order for eIF-2 to recycle and catalyze another round of initiation, the GDP bound to eIF-2 must exchange with GTP by way of a reaction catalyzed by eIF2B. The polypeptide is Eukaryotic translation initiation factor 2 subunit alpha (Saccharomyces cerevisiae (strain ATCC 204508 / S288c) (Baker's yeast)).